Reading from the N-terminus, the 248-residue chain is Large ribosomal subunit protein uL30 (248 aa).

The interval 22-42 is disordered; the sequence is KSQEKARAERQAEIEKKKAAN. Basic and acidic residues predominate over residues 24 to 42; that stretch reads QEKARAERQAEIEKKKAAN.

The protein belongs to the universal ribosomal protein uL30 family. As to quaternary structure, component of the large ribosomal subunit (LSU). Mature N.crassa ribosomes consist of a small (40S) and a large (60S) subunit. The 40S small subunit contains 1 molecule of ribosomal RNA (18S rRNA) and at least 32 different proteins. The large 60S subunit contains 3 rRNA molecules (26S, 5.8S and 5S rRNA) and at least 42 different proteins.

The protein resides in the cytoplasm. In terms of biological role, component of the ribosome, a large ribonucleoprotein complex responsible for the synthesis of proteins in the cell. The small ribosomal subunit (SSU) binds messenger RNAs (mRNAs) and translates the encoded message by selecting cognate aminoacyl-transfer RNA (tRNA) molecules. The large subunit (LSU) contains the ribosomal catalytic site termed the peptidyl transferase center (PTC), which catalyzes the formation of peptide bonds, thereby polymerizing the amino acids delivered by tRNAs into a polypeptide chain. The nascent polypeptides leave the ribosome through a tunnel in the LSU and interact with protein factors that function in enzymatic processing, targeting, and the membrane insertion of nascent chains at the exit of the ribosomal tunnel. This is Large ribosomal subunit protein uL30 (rpl-7) from Neurospora crassa (strain ATCC 24698 / 74-OR23-1A / CBS 708.71 / DSM 1257 / FGSC 987).